The chain runs to 266 residues: ATP synthase subunit a (266 aa).

5 helical membrane-spanning segments follow: residues 33–53, 95–115, 141–161, 206–226, and 237–257; these read FWTL…LFLA, VIAP…LMDL, DVNI…FYSI, LFGN…LLPW, and AIFH…LTIV.

This sequence belongs to the ATPase A chain family. In terms of assembly, F-type ATPases have 2 components, CF(1) - the catalytic core - and CF(0) - the membrane proton channel. CF(1) has five subunits: alpha(3), beta(3), gamma(1), delta(1), epsilon(1). CF(0) has three main subunits: a(1), b(2) and c(9-12). The alpha and beta chains form an alternating ring which encloses part of the gamma chain. CF(1) is attached to CF(0) by a central stalk formed by the gamma and epsilon chains, while a peripheral stalk is formed by the delta and b chains.

The protein localises to the cell inner membrane. Its function is as follows. Key component of the proton channel; it plays a direct role in the translocation of protons across the membrane. This chain is ATP synthase subunit a, found in Klebsiella pneumoniae subsp. pneumoniae (strain ATCC 700721 / MGH 78578).